Reading from the N-terminus, the 441-residue chain is UPF0761 membrane protein RSc1559 (441 aa).

6 consecutive transmembrane segments (helical) span residues 44–64 (VLSL…FPMF), 101–121 (GLTA…MLTV), 141–161 (VLVF…SLSV), 182–202 (VVVG…LYVF), 207–227 (LVAW…FEIA), and 248–268 (FAAL…TLLG).

The protein belongs to the UPF0761 family.

The protein localises to the cell inner membrane. This Ralstonia nicotianae (strain ATCC BAA-1114 / GMI1000) (Ralstonia solanacearum) protein is UPF0761 membrane protein RSc1559.